The following is a 287-amino-acid chain: Bifunctional protein FolD (287 aa).

Residues 168 to 170 (GRS), S193, and I234 each bind NADP(+).

Belongs to the tetrahydrofolate dehydrogenase/cyclohydrolase family. Homodimer.

The catalysed reaction is (6R)-5,10-methylene-5,6,7,8-tetrahydrofolate + NADP(+) = (6R)-5,10-methenyltetrahydrofolate + NADPH. It carries out the reaction (6R)-5,10-methenyltetrahydrofolate + H2O = (6R)-10-formyltetrahydrofolate + H(+). The protein operates within one-carbon metabolism; tetrahydrofolate interconversion. Catalyzes the oxidation of 5,10-methylenetetrahydrofolate to 5,10-methenyltetrahydrofolate and then the hydrolysis of 5,10-methenyltetrahydrofolate to 10-formyltetrahydrofolate. This chain is Bifunctional protein FolD, found in Clostridioides difficile (strain 630) (Peptoclostridium difficile).